We begin with the raw amino-acid sequence, 152 residues long: Alpha-amylase inhibitor BDAI-1 (152 aa).

Positions 1 to 30 (MGAMWMKSMLLVLLLCMLMVTPMTGARSDN) are cleaved as a signal peptide.

This sequence belongs to the protease inhibitor I6 (cereal trypsin/alpha-amylase inhibitor) family. In terms of assembly, homodimer. Five disulfide bonds, which are essential for the inhibitor activity, are probably present. Endosperm.

It localises to the secreted. Could be involved in insect defense mechanisms. Inhibits insect-type alpha-amylase. This Hordeum vulgare (Barley) protein is Alpha-amylase inhibitor BDAI-1 (IAD1).